Consider the following 488-residue polypeptide: 3-octaprenyl-4-hydroxybenzoate carboxy-lyase (488 aa).

A Mn(2+)-binding site is contributed by Asn-172. Prenylated FMN is bound by residues 175-177 (IYR), 189-191 (RWL), and 194-195 (RG). Position 238 (Glu-238) interacts with Mn(2+). The active-site Proton donor is the Asp-287.

Belongs to the UbiD family. In terms of assembly, homohexamer. Prenylated FMN is required as a cofactor. The cofactor is Mn(2+).

It localises to the cell membrane. It catalyses the reaction a 4-hydroxy-3-(all-trans-polyprenyl)benzoate + H(+) = a 2-(all-trans-polyprenyl)phenol + CO2. Its pathway is cofactor biosynthesis; ubiquinone biosynthesis. Its function is as follows. Catalyzes the decarboxylation of 3-octaprenyl-4-hydroxy benzoate to 2-octaprenylphenol, an intermediate step in ubiquinone biosynthesis. The polypeptide is 3-octaprenyl-4-hydroxybenzoate carboxy-lyase (Legionella pneumophila (strain Paris)).